Consider the following 98-residue polypeptide: Large ribosomal subunit protein uL23 (98 aa).

This sequence belongs to the universal ribosomal protein uL23 family. In terms of assembly, part of the 50S ribosomal subunit. Contacts protein L29, and trigger factor when it is bound to the ribosome.

Functionally, one of the early assembly proteins it binds 23S rRNA. One of the proteins that surrounds the polypeptide exit tunnel on the outside of the ribosome. Forms the main docking site for trigger factor binding to the ribosome. In Jannaschia sp. (strain CCS1), this protein is Large ribosomal subunit protein uL23.